A 304-amino-acid polypeptide reads, in one-letter code: Tyrosine recombinase XerC (304 aa).

The Core-binding (CB) domain occupies 6–92; that stretch reads NKLYLQAQAY…VLRQWFAYLV (87 aa). In terms of domain architecture, Tyr recombinase spans 113–292; it reads HLPKNIDAER…DFQHLAKIYD (180 aa). Active-site residues include Arg152, Lys176, His244, Arg247, and His270. Residue Tyr279 is the O-(3'-phospho-DNA)-tyrosine intermediate of the active site.

This sequence belongs to the 'phage' integrase family. XerC subfamily. Forms a cyclic heterotetrameric complex composed of two molecules of XerC and two molecules of XerD.

It is found in the cytoplasm. Functionally, site-specific tyrosine recombinase, which acts by catalyzing the cutting and rejoining of the recombining DNA molecules. The XerC-XerD complex is essential to convert dimers of the bacterial chromosome into monomers to permit their segregation at cell division. It also contributes to the segregational stability of plasmids. This is Tyrosine recombinase XerC from Haemophilus ducreyi (strain 35000HP / ATCC 700724).